We begin with the raw amino-acid sequence, 154 residues long: Putative NADPH-dependent 7-cyano-7-deazaguanine reductase (154 aa).

Residue Asp52 is the Proton donor of the active site. Substrate is bound by residues 67–69 (VES) and 86–87 (HE).

Belongs to the GTP cyclohydrolase I family. QueF type 1 subfamily.

The protein resides in the cytoplasm. It catalyses the reaction 7-aminomethyl-7-carbaguanine + 2 NADP(+) = 7-cyano-7-deazaguanine + 2 NADPH + 3 H(+). Its pathway is tRNA modification; tRNA-queuosine biosynthesis. Catalyzes the NADPH-dependent reduction of 7-cyano-7-deazaguanine (preQ0) to 7-aminomethyl-7-deazaguanine (preQ1). In Streptococcus pneumoniae (strain ATCC BAA-255 / R6), this protein is Putative NADPH-dependent 7-cyano-7-deazaguanine reductase.